A 144-amino-acid polypeptide reads, in one-letter code: Macromomycin (144 aa).

The signal sequence occupies residues M1–G32. Cystine bridges form between C68-C78 and C120-C125.

It belongs to the neocarzinostatin family.

Functionally, binds non-covalently to a chromophore which is the cytotoxic and mutagenic component of the antibiotic. The chromophore binds to DNA as a weak intercalator and causes single- and double-strand breaks. The polypeptide is Macromomycin (Streptomyces macromomyceticus).